The primary structure comprises 411 residues: G1/S-specific cyclin pas1 (411 aa).

2 disordered regions span residues 210–253 (LKNQ…PSVL) and 307–326 (SLSK…VGVY). Residues 218-252 (PSSSPQTTQDSSPILTMAPSTPVSVGSTPPSTPSV) are compositionally biased toward low complexity.

Belongs to the cyclin family.

Functionally, essential for the control of the cell cycle at the G1/S (start) transition. Interacts with the pef1 protein kinase. The pef1/pas1 complex activates the res2/cdc10 complex. In Schizosaccharomyces pombe (strain 972 / ATCC 24843) (Fission yeast), this protein is G1/S-specific cyclin pas1 (pas1).